The sequence spans 816 residues: Sodium/hydrogen exchanger 1 (816 aa).

The Extracellular segment spans residues 1–98 (MLLWSAVRGL…FPVLGIDYTH (98 aa)). The segment covering 37–50 (LQLSPTDSTTPDSQ) has biased composition (polar residues). Positions 37–79 (LQLSPTDSTTPDSQPSRERSIGDVTTAPPEVTPESRPVNRSVT) are disordered. The N-linked (GlcNAc...) asparagine glycan is linked to Asn-75. Residues 99-121 (VRTPFEISLWILLACLMKIGFHV) traverse the membrane as a helical segment. The Cytoplasmic segment spans residues 122–130 (IPTISSIVP). A helical transmembrane segment spans residues 131 to 148 (ESCLLIVVGLLVGGLIKG). Residues 149 to 158 (VGEKPPFLQS) are Extracellular-facing. A helical membrane pass occupies residues 159–176 (EVFFLFLLPPIILDAGYF). The Cytoplasmic portion of the chain corresponds to 177–186 (LPLRQFTENL). A helical transmembrane segment spans residues 187 to 215 (GTILIFAVVGTLWNAFFLGGLMYAVCLVG). Residues 216 to 222 (GEQINNI) lie on the Extracellular side of the membrane. The chain crosses the membrane as a helical span at residues 223–249 (GLLDNLLFGSIISAVDPVAVLAVFEEI). The Cytoplasmic portion of the chain corresponds to 250-252 (HIN). Residues 253 to 283 (ELLHILVFGESLLNDAVTVVLYHLFEEFANY) form a helical membrane-spanning segment. The Extracellular segment spans residues 284–287 (DHVG). A helical transmembrane segment spans residues 288 to 322 (IVDIVLGFLSFFVVALGGVFVGVVYGVIAAFTSRF). The Cytoplasmic segment spans residues 323–328 (TAHIRV). The chain crosses the membrane as a helical span at residues 329–341 (IEPLFVFLYSYMA). Topologically, residues 342 to 350 (YLSAELFHL) are extracellular. Residues 351-371 (SGIMALIASGVVMRPYVEANI) form a helical membrane-spanning segment. Over 372–373 (SH) the chain is Cytoplasmic. Residues 374-404 (KSHTTIKYFLKMWSSVSETLIFIFLGVSTVA) form a helical membrane-spanning segment. The Extracellular portion of the chain corresponds to 405 to 410 (GSHHWN). The helical transmembrane segment at 411-438 (WTFVISTLLFCLIARVLGVLGLTWFINK) threads the bilayer. At 439 to 444 (FRIVKL) the chain is on the cytoplasmic side. Residues 445-469 (TPKDQFIIAYGGLRGAIAFSLGYLL) form a helical membrane-spanning segment. Residues 470–475 (DKKHFP) are Extracellular-facing. A helical membrane pass occupies residues 476–505 (MCDLFLTAIITVIFFTVFVQGMTIRPLVDL). Residues 503–545 (VDLLAVKKKQETKRSINEEIHTQFLDHLLTGIEDICGHYGHHH) form an interaction with TESC region. Residues 506-816 (LAVKKKQETK…EGEPFIPKGQ (311 aa)) lie on the Cytoplasmic side of the membrane. The interval 509–516 (KKKQETKR) is PI(4,5)P2-binding region. The tract at residues 515–545 (KRSINEEIHTQFLDHLLTGIEDICGHYGHHH) is interaction with CHP2. The segment at 540 to 545 (HYGHHH) is confers pH-dependent PI(4,5)P2 binding. Residues 552-560 (RFNKKYVKK) form a PI(4,5)P2-binding region region. Residues Ser-599 and Ser-602 each carry the phosphoserine modification. Thr-603 is modified (phosphothreonine). Phosphoserine occurs at positions 605 and 648. The interaction with TESC stretch occupies residues 633–816 (KILRNNLQKT…EGEPFIPKGQ (184 aa)). The interval 633-816 (KILRNNLQKT…EGEPFIPKGQ (184 aa)) is interaction with CALM1. Residues 684–687 (LTVP) form an interaction with PPP3CA region. A phosphoserine mark is found at Ser-693, Ser-697, and Ser-703. Positions 715–720 (PVITID) are interaction with PPP3CA. A phosphoserine mark is found at Ser-723, Ser-726, Ser-729, Ser-786, Ser-788, and Ser-797. The interval 748–816 (PRVAEEAAEE…EGEPFIPKGQ (69 aa)) is disordered. A compositionally biased stretch (polar residues) spans 783–792 (PSDSPSSQRM).

Belongs to the monovalent cation:proton antiporter 1 (CPA1) transporter (TC 2.A.36) family. Homodimer; dimerization is crucial for its function. Oligomer. Interacts with CALM in a calcium-dependent manner. Interacts with TESC. Interacts (via the juxtamembrane region of the cytoplasmic C-terminal domain) with CHP1; the interaction occurs at the plasma membrane in a calcium-dependent manner. Interacts with CHP2; the interaction occurs in a calcium-dependent manner. Interacts with EZR; regulates the cytoskeletal interactions of SLC9A1 and promotes stress fiber formation. In terms of processing, ubiquitinated, leading to its degradation by the proteasome. Ubiquitination is reduced by CHP1. O-glycosylated. Post-translationally, palmitoylated; may play a major role in SLC9A1 regulation. In terms of processing, phosphorylation at Ser-648 by AKT1 reduces SLC9A1 binding to CALM1. In terms of tissue distribution, kidney and intestine.

Its subcellular location is the cell membrane. It is found in the basolateral cell membrane. The enzyme catalyses Na(+)(in) + H(+)(out) = Na(+)(out) + H(+)(in). It catalyses the reaction Li(+)(out) + H(+)(in) = Li(+)(in) + H(+)(out). It carries out the reaction Li(+)(in) + Na(+)(out) = Li(+)(out) + Na(+)(in). With respect to regulation, activated at acidic pHs. Inhibited by cariporide and eniporide. Phosphatidylinositol 4,5-bisphosphate (PI(4,5)P2) and phosphatidylinositol 3,4,5-trisphosphate (PI(3,4,5)P3) bind and differentially regulate SLC9A1 activity. In terms of biological role, electroneutral Na(+) /H(+) antiporter that extrudes Na(+) in exchange for external protons driven by the inward sodium ion chemical gradient, protecting cells from acidification that occurs from metabolism. Exchanges intracellular H(+) ions for extracellular Na(+) in 1:1 stoichiometry. Plays a key role in maintening intracellular pH neutral and cell volume, and thus is important for cell growth, proliferation, migration and survival. In addition, can transport lithium Li(+) and functions also as a Na(+)/Li(+) antiporter. SLC9A1 also functions in membrane anchoring and organization of scaffolding complexes that coordinate signaling inputs. The chain is Sodium/hydrogen exchanger 1 (SLC9A1) from Oryctolagus cuniculus (Rabbit).